The primary structure comprises 406 residues: MAVNLTEKTAEQLPDIDGIALYTAQAGVKKPGHTDLTLIAVAAGSTVGAVFTTNRFCAAPVHIAKSHLFDEDGVRALVINTGNANAGTGAQGRIDALAVCAAAARQIGCKPNQVMPFSTGVILEPLPADKIIAALPKMQPAFWNEAARAIMTTDTVPKAASREGKVGDQHTVRATGIAKGSGMIHPNMATMLGFIATDAKVSQPVLQLMTQEIADETFNTITVDGDTSTNDSFVIIATGKNSQSEIDNIADPRYAQLKELLCSLALELAQAIVRDGEGATKFITVRVENAKTCDEARQAAYAAARSPLVKTAFFASDPNLGKRLAAIGYADVADLDTDLVEMYLDDILVAEHGGRAASYTEAQGQAVMSKDEITVRIKLHRGQAAATVYTCDLSHGYVSINADYRS.

Thr-152, Lys-179, Thr-190, Glu-277, Asn-401, and Ser-406 together coordinate substrate. Thr-190 serves as the catalytic Nucleophile.

The protein belongs to the ArgJ family. In terms of assembly, heterotetramer of two alpha and two beta chains.

The protein localises to the cytoplasm. It carries out the reaction N(2)-acetyl-L-ornithine + L-glutamate = N-acetyl-L-glutamate + L-ornithine. The enzyme catalyses L-glutamate + acetyl-CoA = N-acetyl-L-glutamate + CoA + H(+). The protein operates within amino-acid biosynthesis; L-arginine biosynthesis; L-ornithine and N-acetyl-L-glutamate from L-glutamate and N(2)-acetyl-L-ornithine (cyclic): step 1/1. It participates in amino-acid biosynthesis; L-arginine biosynthesis; N(2)-acetyl-L-ornithine from L-glutamate: step 1/4. Catalyzes two activities which are involved in the cyclic version of arginine biosynthesis: the synthesis of N-acetylglutamate from glutamate and acetyl-CoA as the acetyl donor, and of ornithine by transacetylation between N(2)-acetylornithine and glutamate. The chain is Arginine biosynthesis bifunctional protein ArgJ from Neisseria gonorrhoeae.